A 203-amino-acid chain; its full sequence is Ribosome hibernation promotion factor (203 aa).

The protein belongs to the HPF/YfiA ribosome-associated protein family. Long HPF subfamily. In terms of assembly, interacts with 100S ribosomes.

Its subcellular location is the cytoplasm. Required for dimerization of active 70S ribosomes into 100S ribosomes in stationary phase; 100S ribosomes are translationally inactive and sometimes present during exponential growth. In Bradyrhizobium diazoefficiens (strain JCM 10833 / BCRC 13528 / IAM 13628 / NBRC 14792 / USDA 110), this protein is Ribosome hibernation promotion factor.